We begin with the raw amino-acid sequence, 604 residues long: Replication protein A 70 kDa DNA-binding subunit B (604 aa).

Positions 170-256 form a DNA-binding region, OB; sequence WTIKVRVTNK…QNDYEMTLNE (87 aa). The segment at 468 to 488 adopts a C4-type zinc-finger fold; that stretch reads CKTCNKKVTEAMDSGYWCESC.

It belongs to the replication factor A protein 1 family. As to quaternary structure, heterotrimer of RPA1, RPA2 and RPA3 (canonical replication protein A complex).

The protein resides in the nucleus. In terms of biological role, component of the replication protein A complex (RPA) required for DNA recombination, repair and replication. The activity of RPA is mediated by single-stranded DNA binding and protein interactions. Probably involved in repair of double-strand DNA breaks (DSBs) induced by genotoxic stresses. The sequence is that of Replication protein A 70 kDa DNA-binding subunit B (RPA1B) from Arabidopsis thaliana (Mouse-ear cress).